The primary structure comprises 315 residues: Prephenate dehydratase (315 aa).

The Prephenate dehydratase domain occupies 7 to 190 (VVAYLGPAGT…ARTRFVAVQA (184 aa)). The ACT domain maps to 204–283 (SVIFSLPNVP…LVFVGSWPSN (80 aa)).

It carries out the reaction prephenate + H(+) = 3-phenylpyruvate + CO2 + H2O. It functions in the pathway amino-acid biosynthesis; L-phenylalanine biosynthesis; phenylpyruvate from prephenate: step 1/1. This chain is Prephenate dehydratase (pheA), found in Corynebacterium glutamicum (strain ATCC 13032 / DSM 20300 / JCM 1318 / BCRC 11384 / CCUG 27702 / LMG 3730 / NBRC 12168 / NCIMB 10025 / NRRL B-2784 / 534).